The chain runs to 89 residues: Small ribosomal subunit protein uS17 (89 aa).

It belongs to the universal ribosomal protein uS17 family. In terms of assembly, part of the 30S ribosomal subunit.

Functionally, one of the primary rRNA binding proteins, it binds specifically to the 5'-end of 16S ribosomal RNA. The protein is Small ribosomal subunit protein uS17 of Verminephrobacter eiseniae (strain EF01-2).